The primary structure comprises 129 residues: UPF0102 protein Ctha_1382 (129 aa).

The protein belongs to the UPF0102 family.

The sequence is that of UPF0102 protein Ctha_1382 from Chloroherpeton thalassium (strain ATCC 35110 / GB-78).